The following is a 72-amino-acid chain: Large ribosomal subunit protein bL31 (72 aa).

Positions 16, 18, 38, and 41 each coordinate Zn(2+).

It belongs to the bacterial ribosomal protein bL31 family. Type A subfamily. Part of the 50S ribosomal subunit. Requires Zn(2+) as cofactor.

In terms of biological role, binds the 23S rRNA. This Aliivibrio salmonicida (strain LFI1238) (Vibrio salmonicida (strain LFI1238)) protein is Large ribosomal subunit protein bL31.